Here is a 380-residue protein sequence, read N- to C-terminus: Histidinol-phosphate aminotransferase (380 aa).

Lysine 235 is subject to N6-(pyridoxal phosphate)lysine.

It belongs to the class-II pyridoxal-phosphate-dependent aminotransferase family. Histidinol-phosphate aminotransferase subfamily. Homodimer. Requires pyridoxal 5'-phosphate as cofactor.

The catalysed reaction is L-histidinol phosphate + 2-oxoglutarate = 3-(imidazol-4-yl)-2-oxopropyl phosphate + L-glutamate. Its pathway is amino-acid biosynthesis; L-histidine biosynthesis; L-histidine from 5-phospho-alpha-D-ribose 1-diphosphate: step 7/9. The protein is Histidinol-phosphate aminotransferase of Rhodococcus jostii (strain RHA1).